The following is a 162-amino-acid chain: Interleukin-15 (162 aa).

Residues 1–29 form the signal peptide; sequence MRILKPYLRSTSIQCYLCLLLNSHFLTEA. Residues 30–48 constitute a propeptide that is removed on maturation; sequence GIHVFILGCISAGLPKTEA. 2 cysteine pairs are disulfide-bonded: Cys-83–Cys-133 and Cys-90–Cys-136. N-linked (GlcNAc...) asparagine glycosylation is found at Asn-113, Asn-121, and Asn-127.

This sequence belongs to the IL-15/IL-21 family.

Its subcellular location is the secreted. In terms of biological role, cytokine that plays a major role in the development of inflammatory and protective immune responses to microbial invaders and parasites by modulating immune cells of both the innate and adaptive immune systems. Stimulates the proliferation of natural killer cells, T-cells and B-cells and promotes the secretion of several cytokines. In monocytes, induces the production of IL8 and monocyte chemotactic protein 1/CCL2, two chemokines that attract neutrophils and monocytes respectively to sites of infection. Unlike most cytokines, which are secreted in soluble form, IL15 is expressed in association with its high affinity IL15RA on the surface of IL15-producing cells and delivers signals to target cells that express IL2RB and IL2RG receptor subunits. Binding to its receptor triggers the phosphorylation of JAK1 and JAK3 and the recruitment and subsequent phosphorylation of signal transducer and activator of transcription-3/STAT3 and STAT5. In mast cells, induces the rapid tyrosine phosphorylation of STAT6 and thereby controls mast cell survival and release of cytokines such as IL4. The protein is Interleukin-15 (IL15) of Bubalus bubalis (Domestic water buffalo).